The primary structure comprises 155 residues: Peptide deformylase 2 (155 aa).

Fe cation is bound by residues Cys90 and His132. Glu133 is an active-site residue. Position 136 (His136) interacts with Fe cation.

It belongs to the polypeptide deformylase family. Fe(2+) serves as cofactor.

It carries out the reaction N-terminal N-formyl-L-methionyl-[peptide] + H2O = N-terminal L-methionyl-[peptide] + formate. Removes the formyl group from the N-terminal Met of newly synthesized proteins. Requires at least a dipeptide for an efficient rate of reaction. N-terminal L-methionine is a prerequisite for activity but the enzyme has broad specificity at other positions. This chain is Peptide deformylase 2, found in Clostridium perfringens (strain 13 / Type A).